A 53-amino-acid chain; its full sequence is 20 kDa chaperonin (53 aa).

2 cpn-10 domain regions span residues 1 to 10 and 11 to 53; these read YTSIKPLGDR and VAEA…KITP.

This sequence belongs to the GroES chaperonin family. Forms stable complexes with cpn60 in the presence of ATP. Homotetramer.

The protein resides in the plastid. Its subcellular location is the chloroplast. In terms of biological role, seems to function only as a co-chaperone, along with cpn60, and in certain cases is essential for the discharge of biologically active proteins from cpn60. This chain is 20 kDa chaperonin, found in Populus euphratica (Euphrates poplar).